The chain runs to 157 residues: UPF0262 protein RL0614 (157 aa).

It belongs to the UPF0262 family.

The chain is UPF0262 protein RL0614 from Rhizobium johnstonii (strain DSM 114642 / LMG 32736 / 3841) (Rhizobium leguminosarum bv. viciae).